The sequence spans 556 residues: Glutamine--tRNA ligase (556 aa).

Residues 34 to 44 (PEPNGYLHIGH) carry the 'HIGH' region motif. Residues 35 to 37 (EPN) and 41 to 47 (HIGHAKS) each bind ATP. Positions 67 and 212 each coordinate L-glutamine. ATP contacts are provided by residues Thr231, 261 to 262 (RL), and 269 to 271 (MSK). A 'KMSKS' region motif is present at residues 268–272 (VMSKR).

This sequence belongs to the class-I aminoacyl-tRNA synthetase family. As to quaternary structure, monomer.

The protein resides in the cytoplasm. It carries out the reaction tRNA(Gln) + L-glutamine + ATP = L-glutaminyl-tRNA(Gln) + AMP + diphosphate. The sequence is that of Glutamine--tRNA ligase from Vibrio vulnificus (strain YJ016).